The chain runs to 397 residues: MPITERWLLPEGVGELLPIEAEQMERARRVLIDLFHSWGYDLVVPPLIEYLESLLTGVGTDLELQTFKLTDQLTGRLMGVRADITPQVARIAAHCIQRKGVTRLCYIGSVLHTLSQGLGGTRNPIQVGAELYGHSGTESDLEVLRLALEALDVVGVKQVHLDLGHVGIFRDLVLQANLSPEEEYGLFNILQRKARDEIDTMLRNRDVGPQLRHMFMALTSLNGGREVLDEAEQVLAGSGVEQALTTLKEVATLTDKYLPRVPMHFDLGELRGYRYHTGLVFAAYIPGRGQAVAQGGRYDDIGQVFGRAQPATGFSMDLKELVTLGSSTTTTRLGIFAPWSEAPGFEREVARLRQQGERVVYGFPDTVSNYDELGCDRELVLKAKQWQIIEIRKLGRG.

Belongs to the class-II aminoacyl-tRNA synthetase family. HisZ subfamily. In terms of assembly, heteromultimer composed of HisG and HisZ subunits.

It localises to the cytoplasm. The protein operates within amino-acid biosynthesis; L-histidine biosynthesis; L-histidine from 5-phospho-alpha-D-ribose 1-diphosphate: step 1/9. Required for the first step of histidine biosynthesis. May allow the feedback regulation of ATP phosphoribosyltransferase activity by histidine. The chain is ATP phosphoribosyltransferase regulatory subunit from Nitrosococcus oceani (strain ATCC 19707 / BCRC 17464 / JCM 30415 / NCIMB 11848 / C-107).